The following is a 194-amino-acid chain: 23 kDa U4/U6.U5 small nuclear ribonucleoprotein component (194 aa).

The segment at 80–104 (FYCDICNLTFKDTLQYIDHLNHKVH) adopts a C2H2-type zinc-finger fold.

Component of the U4/U6-U5 tri-snRNP complex composed of the U4, U6 and U5 snRNAs and at least PRP3, PRP4, PRP6, PRP8, PRP18, PRP31, PRP38, SNU13, SNU23, SNU66, SNU114, SPP381, SMB1, SMD1, SMD2, SMD3, SMX2, SMX3, LSM2, LSM3, LSM4, LSM5, LSM6, LSM7, LSM8, BRR2 and DIB1.

The protein resides in the nucleus. Its function is as follows. Participates in pre-mRNA splicing. Part of the U4/U5/U6 tri-snRNP complex, one of the building blocks of the spliceosome. The protein is 23 kDa U4/U6.U5 small nuclear ribonucleoprotein component (SNU23) of Saccharomyces cerevisiae (strain ATCC 204508 / S288c) (Baker's yeast).